Reading from the N-terminus, the 220-residue chain is Adenylate kinase (220 aa).

10-15 provides a ligand contact to ATP; it reads GAGKGT. The segment at 30–59 is NMP; sequence STGDLFRANISQQTELGKLAKSYMDEGNLV. Residues Thr-31, Arg-36, 57–59, 85–88, and Gln-92 contribute to the AMP site; these read NLV and GFPR. The tract at residues 126–164 is LID; it reads GRRICRNDSAHVFHVSYKPPKQEGVCDVCGGELYQRDDD. ATP is bound by residues Arg-127 and 137 to 138; that span reads VF. 2 residues coordinate AMP: Arg-161 and Arg-172. An ATP-binding site is contributed by Gly-200.

This sequence belongs to the adenylate kinase family. As to quaternary structure, monomer.

Its subcellular location is the cytoplasm. It carries out the reaction AMP + ATP = 2 ADP. The protein operates within purine metabolism; AMP biosynthesis via salvage pathway; AMP from ADP: step 1/1. Catalyzes the reversible transfer of the terminal phosphate group between ATP and AMP. Plays an important role in cellular energy homeostasis and in adenine nucleotide metabolism. The protein is Adenylate kinase of Streptomyces avermitilis (strain ATCC 31267 / DSM 46492 / JCM 5070 / NBRC 14893 / NCIMB 12804 / NRRL 8165 / MA-4680).